Here is a 906-residue protein sequence, read N- to C-terminus: Protein translocase subunit SecA (906 aa).

Residues Gln-87, Gly-105–Thr-109, and Asp-513 each bind ATP. The tract at residues Gln-860–Asp-906 is disordered. Residues Thr-876–Arg-886 are compositionally biased toward basic and acidic residues. Zn(2+) contacts are provided by Cys-890, Cys-892, Cys-901, and His-902. The segment covering Lys-896–Asp-906 has biased composition (basic residues).

Belongs to the SecA family. In terms of assembly, monomer and homodimer. Part of the essential Sec protein translocation apparatus which comprises SecA, SecYEG and auxiliary proteins SecDF-YajC and YidC. Zn(2+) serves as cofactor.

Its subcellular location is the cell inner membrane. It is found in the cytoplasm. It carries out the reaction ATP + H2O + cellular proteinSide 1 = ADP + phosphate + cellular proteinSide 2.. In terms of biological role, part of the Sec protein translocase complex. Interacts with the SecYEG preprotein conducting channel. Has a central role in coupling the hydrolysis of ATP to the transfer of proteins into and across the cell membrane, serving both as a receptor for the preprotein-SecB complex and as an ATP-driven molecular motor driving the stepwise translocation of polypeptide chains across the membrane. In Psychromonas ingrahamii (strain DSM 17664 / CCUG 51855 / 37), this protein is Protein translocase subunit SecA.